Here is a 306-residue protein sequence, read N- to C-terminus: MSTSMSVARSLPGGPVAEQILAEVAQEVTQLRAAGVTPALATVLVGDDDASVGYIRIKQRQAVQLGFASPHVRLPASASQADLQAVVTQLSADTSVHGVLVQHPVPPHLDFDRAMQALDPEKDVDGMHPVNLGRLALGLPGPTPCTPAGIEALLAYHEVPVAGREVVVLGRGATLGRPLAMVLAQKRPTANAAVTVVHTGVPDWPRYTRRAEIVVAAAGVPGLVRPEHLRPGAVVVNGGVRYAGRRLLPDVDESCATVAGAMTPRVGGVGPTTVAMLFRNAVRAARRTRSSRTPVRLPDSGAPAGR.

NADP(+) is bound by residues 170–172, Thr199, and Val240; that span reads GRG. A disordered region spans residues 285 to 306; sequence ARRTRSSRTPVRLPDSGAPAGR.

This sequence belongs to the tetrahydrofolate dehydrogenase/cyclohydrolase family. Homodimer.

It catalyses the reaction (6R)-5,10-methylene-5,6,7,8-tetrahydrofolate + NADP(+) = (6R)-5,10-methenyltetrahydrofolate + NADPH. It carries out the reaction (6R)-5,10-methenyltetrahydrofolate + H2O = (6R)-10-formyltetrahydrofolate + H(+). It participates in one-carbon metabolism; tetrahydrofolate interconversion. Functionally, catalyzes the oxidation of 5,10-methylenetetrahydrofolate to 5,10-methenyltetrahydrofolate and then the hydrolysis of 5,10-methenyltetrahydrofolate to 10-formyltetrahydrofolate. In Salinispora tropica (strain ATCC BAA-916 / DSM 44818 / JCM 13857 / NBRC 105044 / CNB-440), this protein is Bifunctional protein FolD 1.